The sequence spans 492 residues: N-succinylglutamate 5-semialdehyde dehydrogenase (492 aa).

Glycine 220–glycine 225 contributes to the NAD(+) binding site. Active-site residues include glutamate 243 and cysteine 277.

This sequence belongs to the aldehyde dehydrogenase family. AstD subfamily.

It catalyses the reaction N-succinyl-L-glutamate 5-semialdehyde + NAD(+) + H2O = N-succinyl-L-glutamate + NADH + 2 H(+). The protein operates within amino-acid degradation; L-arginine degradation via AST pathway; L-glutamate and succinate from L-arginine: step 4/5. Its function is as follows. Catalyzes the NAD-dependent reduction of succinylglutamate semialdehyde into succinylglutamate. The polypeptide is N-succinylglutamate 5-semialdehyde dehydrogenase (Escherichia coli O127:H6 (strain E2348/69 / EPEC)).